The sequence spans 238 residues: Ribonuclease PH (238 aa).

Phosphate-binding positions include Arg-86 and 124-126 (GTR).

This sequence belongs to the RNase PH family. As to quaternary structure, homohexameric ring arranged as a trimer of dimers.

The catalysed reaction is tRNA(n+1) + phosphate = tRNA(n) + a ribonucleoside 5'-diphosphate. In terms of biological role, phosphorolytic 3'-5' exoribonuclease that plays an important role in tRNA 3'-end maturation. Removes nucleotide residues following the 3'-CCA terminus of tRNAs; can also add nucleotides to the ends of RNA molecules by using nucleoside diphosphates as substrates, but this may not be physiologically important. Probably plays a role in initiation of 16S rRNA degradation (leading to ribosome degradation) during starvation. The protein is Ribonuclease PH of Erwinia tasmaniensis (strain DSM 17950 / CFBP 7177 / CIP 109463 / NCPPB 4357 / Et1/99).